The following is a 314-amino-acid chain: Methionyl-tRNA formyltransferase (314 aa).

(6S)-5,6,7,8-tetrahydrofolate is bound at residue 110 to 113 (SLLP).

Belongs to the Fmt family.

It carries out the reaction L-methionyl-tRNA(fMet) + (6R)-10-formyltetrahydrofolate = N-formyl-L-methionyl-tRNA(fMet) + (6S)-5,6,7,8-tetrahydrofolate + H(+). Functionally, attaches a formyl group to the free amino group of methionyl-tRNA(fMet). The formyl group appears to play a dual role in the initiator identity of N-formylmethionyl-tRNA by promoting its recognition by IF2 and preventing the misappropriation of this tRNA by the elongation apparatus. The chain is Methionyl-tRNA formyltransferase from Bacillus cytotoxicus (strain DSM 22905 / CIP 110041 / 391-98 / NVH 391-98).